The sequence spans 162 residues: Ribosomal RNA large subunit methyltransferase H (162 aa).

Position 108 (glycine 108) interacts with S-adenosyl-L-methionine.

The protein belongs to the RNA methyltransferase RlmH family. Homodimer.

It is found in the cytoplasm. The catalysed reaction is pseudouridine(1915) in 23S rRNA + S-adenosyl-L-methionine = N(3)-methylpseudouridine(1915) in 23S rRNA + S-adenosyl-L-homocysteine + H(+). In terms of biological role, specifically methylates the pseudouridine at position 1915 (m3Psi1915) in 23S rRNA. The polypeptide is Ribosomal RNA large subunit methyltransferase H (Methylobacterium nodulans (strain LMG 21967 / CNCM I-2342 / ORS 2060)).